The sequence spans 269 residues: Phosphonates import ATP-binding protein PhnC (269 aa).

The ABC transporter domain occupies 8–251 (IHLYGASLRH…LLDALYANEQ (244 aa)). 40–47 (GPSGAGKS) is an ATP binding site.

It belongs to the ABC transporter superfamily. Phosphonates importer (TC 3.A.1.9.1) family. In terms of assembly, the complex is composed of two ATP-binding proteins (PhnC), two transmembrane proteins (PhnE) and a solute-binding protein (PhnD).

The protein resides in the cell inner membrane. It catalyses the reaction phosphonate(out) + ATP + H2O = phosphonate(in) + ADP + phosphate + H(+). Part of the ABC transporter complex PhnCDE involved in phosphonates import. Responsible for energy coupling to the transport system. The sequence is that of Phosphonates import ATP-binding protein PhnC from Pseudomonas putida (strain ATCC 47054 / DSM 6125 / CFBP 8728 / NCIMB 11950 / KT2440).